The primary structure comprises 824 residues: Intraflagellar transport protein 88 homolog (824 aa).

Positions 113–134 (FDPLSQSRGPASPLEAKKKDSP) are disordered. TPR repeat units lie at residues 197 to 230 (YSVLFNLASQYSVNEMYAEALNTYQVIVKNKMFS), 233 to 266 (GILKMNMGNIYLKQRNYSKAIKFYRMALDQVPSV), 272 to 305 (IKIMQNIGVTFIQAGQYSDAINSYEHIMSMAPNL), 307 to 338 (AGYNLTICYFAIGDREKMKKAFQKLITVPLEI), 415 to 448 (NDLEINKAVTYLRQKDYNQAVEILKVLEKKDSRV), 450 to 483 (SAAATNLSALYYMGKDFAQASSYADIAVNSDRYN), 484 to 517 (PAALTNKGNTVFANGDYEKAAEFYKEALRNDSSC), 518 to 551 (TEALYNIGLTYEKLNRLDEALDCFLKLHAILRNS), 552 to 585 (AEVLYQIANIYELMENPSQAIEWLMQVVSVIPTD), 586 to 619 (PQVLSKLGELYDREGDKSQAFQYYYESYRYFPCN), 620 to 653 (IEVIEWLGAYYIDTQFWEKAIQYFERASLIQPTQ), and 654 to 687 (VKWQLMVASCFRRSGNYQKALDTYKDTHRKFPEN). The disordered stretch occupies residues 724-824 (EQRIKSGRDG…EELGDDLLPE (101 aa)). Positions 748–757 (DSGQNYSASS) are enriched in polar residues. Positions 797–808 (ERPKTAAKKRID) are enriched in basic and acidic residues. Residues 809-824 (EDDFADEELGDDLLPE) show a composition bias toward acidic residues.

As to quaternary structure, component of the IFT complex B, at least composed of IFT20, IFT22, IFT25, IFT27, IFT46, IFT52, TRAF3IP1/IFT54, IFT57, IFT74, IFT80, IFT81, and IFT88. Interacts with IFT20, IFT22, IFT25, IFT27, IFT52, TRAF3IP1, IFT74, IFT80 and IFT81. Interacts with IFT172. Interacts with IFT57. Interacts with IFT46. Interacts with IFT70B. Interacts with C2CD3. Interacts with ENTR1 (via N-terminus). Interacts with LRRC56. Interacts with DZIP1. Interacts with CCDC38. Interacts with CCDC146. Interacts with CFAP53. Expressed in the heart, brain, liver, lung, kidney, skeletal muscle and pancreas.

It is found in the cytoplasm. The protein resides in the cytoskeleton. The protein localises to the microtubule organizing center. Its subcellular location is the centrosome. It localises to the centriole. It is found in the cell projection. The protein resides in the cilium. The protein localises to the cilium basal body. Its subcellular location is the flagellum. Functionally, positively regulates primary cilium biogenesis. Also involved in autophagy since it is required for trafficking of ATG16L and the expansion of the autophagic compartment. The protein is Intraflagellar transport protein 88 homolog (IFT88) of Homo sapiens (Human).